The following is a 568-amino-acid chain: Urease subunit alpha (568 aa).

One can recognise a Urease domain in the interval 130–568 (GGIDTHIHFI…LPMAQRYFLF (439 aa)). 3 residues coordinate Ni(2+): His-135, His-137, and Lys-218. Lys-218 is modified (N6-carboxylysine). Substrate is bound at residue His-220. Ni(2+) contacts are provided by His-247 and His-273. His-321 (proton donor) is an active-site residue. Asp-361 contributes to the Ni(2+) binding site.

Belongs to the metallo-dependent hydrolases superfamily. Urease alpha subunit family. As to quaternary structure, heterotrimer of UreA (gamma), UreB (beta) and UreC (alpha) subunits. Three heterotrimers associate to form the active enzyme. The cofactor is Ni cation. Post-translationally, carboxylation allows a single lysine to coordinate two nickel ions.

The protein resides in the cytoplasm. It carries out the reaction urea + 2 H2O + H(+) = hydrogencarbonate + 2 NH4(+). Its pathway is nitrogen metabolism; urea degradation; CO(2) and NH(3) from urea (urease route): step 1/1. In Burkholderia multivorans (strain ATCC 17616 / 249), this protein is Urease subunit alpha.